Consider the following 338-residue polypeptide: Taste receptor type 2 member 39 (338 aa).

Topologically, residues 1–30 (MLGRCFPPNTKEKQQLRMIKLCDPAESELS) are extracellular. Residues 31–51 (PFLITLTLAVLLAEYLTGIIA) form a helical membrane-spanning segment. The Cytoplasmic segment spans residues 52–74 (NGFITAIHAAEWVQNKSVSTSGR). A helical membrane pass occupies residues 75–95 (ILVFLSVSRIALQSLMMLEIT). Residues 96–116 (ISSTSLSFYSEDAVYYAFKIS) lie on the Extracellular side of the membrane. The chain crosses the membrane as a helical span at residues 117-137 (FIFLNFCSLWFAAWLSFFYFV). Over 138 to 156 (KIANFSYPLFLKLRWRISG) the chain is Cytoplasmic. The chain crosses the membrane as a helical span at residues 157-177 (LIPWLLWLSVFISFSHSMFCI). At 178–205 (NICTGYCDNSFPIHSSNSTEKTYFSEIS) the chain is on the extracellular side. An N-linked (GlcNAc...) asparagine glycan is attached at asparagine 194. A helical membrane pass occupies residues 206–226 (VVSLAFFFNLGIVIPLIMFIL). At 227-262 (AAILLILSLKRHTLHMGSNATGSKDPSMEAHIGAIK) the chain is on the cytoplasmic side. A helical membrane pass occupies residues 263–283 (ATSYFLILYIFNAVALFIYLS). The Extracellular portion of the chain corresponds to 284–291 (NMFDINSL). The chain crosses the membrane as a helical span at residues 292–312 (WNTLCQIIMAAYPASHSILLI). Over 313–338 (KDNPGLRRAWKQLQHRLHLYPKQWTL) the chain is Cytoplasmic.

Belongs to the G-protein coupled receptor T2R family.

Its subcellular location is the membrane. In terms of biological role, receptor that may play a role in the perception of bitterness and is gustducin-linked. May play a role in sensing the chemical composition of the gastrointestinal content. The activity of this receptor may stimulate alpha gustducin, mediate PLC-beta-2 activation and lead to the gating of TRPM5. The polypeptide is Taste receptor type 2 member 39 (TAS2R39) (Macaca mulatta (Rhesus macaque)).